The primary structure comprises 464 residues: Bifunctional protein GlmU (464 aa).

Positions 1-236 (MRAVILAAGL…PTEALGVNTR (236 aa)) are pyrophosphorylase. UDP-N-acetyl-alpha-D-glucosamine-binding positions include 6–9 (LAAG), Lys-20, and 77–78 (GT). Asp-102 serves as a coordination point for Mg(2+). The UDP-N-acetyl-alpha-D-glucosamine site is built by Gly-145, Glu-161, Asn-176, and Asn-234. Asn-234 provides a ligand contact to Mg(2+). A linker region spans residues 237 to 257 (WDLALVENVIKLKIARYWAER). Residues 258–464 (GVTVHYPETV…GRGKKKLQKD (207 aa)) are N-acetyltransferase. UDP-N-acetyl-alpha-D-glucosamine contacts are provided by Arg-340 and Lys-358. His-370 acts as the Proton acceptor in catalysis. Residues Tyr-373 and Asn-384 each contribute to the UDP-N-acetyl-alpha-D-glucosamine site. Residues Ala-387, 393–394 (NY), Ser-412, Gly-430, and Arg-447 contribute to the acetyl-CoA site.

The protein in the N-terminal section; belongs to the N-acetylglucosamine-1-phosphate uridyltransferase family. In the C-terminal section; belongs to the transferase hexapeptide repeat family. Homotrimer. It depends on Mg(2+) as a cofactor.

It is found in the cytoplasm. It catalyses the reaction alpha-D-glucosamine 1-phosphate + acetyl-CoA = N-acetyl-alpha-D-glucosamine 1-phosphate + CoA + H(+). The enzyme catalyses N-acetyl-alpha-D-glucosamine 1-phosphate + UTP + H(+) = UDP-N-acetyl-alpha-D-glucosamine + diphosphate. It functions in the pathway nucleotide-sugar biosynthesis; UDP-N-acetyl-alpha-D-glucosamine biosynthesis; N-acetyl-alpha-D-glucosamine 1-phosphate from alpha-D-glucosamine 6-phosphate (route II): step 2/2. Its pathway is nucleotide-sugar biosynthesis; UDP-N-acetyl-alpha-D-glucosamine biosynthesis; UDP-N-acetyl-alpha-D-glucosamine from N-acetyl-alpha-D-glucosamine 1-phosphate: step 1/1. It participates in bacterial outer membrane biogenesis; LPS lipid A biosynthesis. In terms of biological role, catalyzes the last two sequential reactions in the de novo biosynthetic pathway for UDP-N-acetylglucosamine (UDP-GlcNAc). The C-terminal domain catalyzes the transfer of acetyl group from acetyl coenzyme A to glucosamine-1-phosphate (GlcN-1-P) to produce N-acetylglucosamine-1-phosphate (GlcNAc-1-P), which is converted into UDP-GlcNAc by the transfer of uridine 5-monophosphate (from uridine 5-triphosphate), a reaction catalyzed by the N-terminal domain. The protein is Bifunctional protein GlmU of Aquifex aeolicus (strain VF5).